The following is a 101-amino-acid chain: Transcription factor ILI2 (101 aa).

The tract at residues 1–22 (MSSSRRSRTSSRLAAAPPPTDE) is disordered. Residues 8 to 63 (RTSSRLAAAPPPTDEQMAELISKLQAVLPTRGGEANAKQASSAEVLQEACRYIRRL) enclose the bHLH domain.

Belongs to the bHLH protein family.

Its function is as follows. Atypical and probable non DNA-binding bHLH transcription factor that integrates multiple signaling pathways to regulate cell elongation and plant development. The sequence is that of Transcription factor ILI2 (ILI2) from Oryza sativa subsp. indica (Rice).